The primary structure comprises 488 residues: ATP synthase subunit beta, chloroplastic (488 aa).

170-177 (GGAGVGKT) provides a ligand contact to ATP.

This sequence belongs to the ATPase alpha/beta chains family. In terms of assembly, F-type ATPases have 2 components, CF(1) - the catalytic core - and CF(0) - the membrane proton channel. CF(1) has five subunits: alpha(3), beta(3), gamma(1), delta(1), epsilon(1). CF(0) has four main subunits: a(1), b(1), b'(1) and c(9-12).

The protein resides in the plastid. It is found in the chloroplast thylakoid membrane. The enzyme catalyses ATP + H2O + 4 H(+)(in) = ADP + phosphate + 5 H(+)(out). Functionally, produces ATP from ADP in the presence of a proton gradient across the membrane. The catalytic sites are hosted primarily by the beta subunits. The chain is ATP synthase subunit beta, chloroplastic from Picea abies (Norway spruce).